The chain runs to 156 residues: MPRRRVIGQRKILPDPKFKSELLAKFVNILMVDGKKSTAEKIVYTALDTMAEKSGKDHLAVFEEALENVRPAVEVKSRRVGGSTYQVPVEVRPVRRNALAMRWLVEAARKRGEKSMAARLAAEMLDAAENKGSAVKKREDVHRMAEANKAFAHYRW.

The protein belongs to the universal ribosomal protein uS7 family. Part of the 30S ribosomal subunit. Contacts proteins S9 and S11.

Its function is as follows. One of the primary rRNA binding proteins, it binds directly to 16S rRNA where it nucleates assembly of the head domain of the 30S subunit. Is located at the subunit interface close to the decoding center, probably blocks exit of the E-site tRNA. The protein is Small ribosomal subunit protein uS7 of Vibrio cholerae serotype O1 (strain ATCC 39315 / El Tor Inaba N16961).